Reading from the N-terminus, the 193-residue chain is Adenylate kinase (193 aa).

11 to 16 (GSGKGT) contacts ATP. An NMP region spans residues 31-60 (STGDIFRANVKGETPLGLEAKKYMDAGDYV). AMP contacts are provided by residues T32, R37, 58–60 (DYV), 86–89 (GYPR), and Q93. The tract at residues 127–137 (GRAKESGRSDD) is LID. Residue R128 coordinates ATP. R134 and R145 together coordinate AMP. G173 contacts ATP.

This sequence belongs to the adenylate kinase family. As to quaternary structure, monomer.

Its subcellular location is the cytoplasm. It carries out the reaction AMP + ATP = 2 ADP. Its pathway is purine metabolism; AMP biosynthesis via salvage pathway; AMP from ADP: step 1/1. Its function is as follows. Catalyzes the reversible transfer of the terminal phosphate group between ATP and AMP. Plays an important role in cellular energy homeostasis and in adenine nucleotide metabolism. This Renibacterium salmoninarum (strain ATCC 33209 / DSM 20767 / JCM 11484 / NBRC 15589 / NCIMB 2235) protein is Adenylate kinase.